The primary structure comprises 103 residues: Large ribosomal subunit protein bL21 (103 aa).

This sequence belongs to the bacterial ribosomal protein bL21 family. Part of the 50S ribosomal subunit. Contacts protein L20.

Its function is as follows. This protein binds to 23S rRNA in the presence of protein L20. In Haemophilus influenzae (strain ATCC 51907 / DSM 11121 / KW20 / Rd), this protein is Large ribosomal subunit protein bL21.